A 510-amino-acid polypeptide reads, in one-letter code: Maturase K (510 aa).

This sequence belongs to the intron maturase 2 family. MatK subfamily.

Its subcellular location is the plastid. Functionally, usually encoded in the trnK tRNA gene intron. Probably assists in splicing its own and other chloroplast group II introns. The polypeptide is Maturase K (Bartsia alpina (Velvet bells)).